The sequence spans 239 residues: Purine nucleoside phosphorylase DeoD-type (239 aa).

Position 5 (His-5) interacts with a purine D-ribonucleoside. Residues Gly-21, Arg-25, Arg-44, and 88–91 (RVGS) each bind phosphate. A purine D-ribonucleoside is bound by residues 180 to 182 (EME) and 204 to 205 (SD). Asp-205 functions as the Proton donor in the catalytic mechanism.

This sequence belongs to the PNP/UDP phosphorylase family. In terms of assembly, homohexamer; trimer of homodimers.

The catalysed reaction is a purine D-ribonucleoside + phosphate = a purine nucleobase + alpha-D-ribose 1-phosphate. It catalyses the reaction a purine 2'-deoxy-D-ribonucleoside + phosphate = a purine nucleobase + 2-deoxy-alpha-D-ribose 1-phosphate. Catalyzes the reversible phosphorolytic breakdown of the N-glycosidic bond in the beta-(deoxy)ribonucleoside molecules, with the formation of the corresponding free purine bases and pentose-1-phosphate. This chain is Purine nucleoside phosphorylase DeoD-type, found in Salmonella gallinarum (strain 287/91 / NCTC 13346).